Here is a 163-residue protein sequence, read N- to C-terminus: Succinate dehydrogenase assembly factor 2, mitochondrial (163 aa).

The protein belongs to the SDHAF2 family. Interacts with the flavoprotein subunit within the SDH catalytic dimer.

It is found in the mitochondrion matrix. Its function is as follows. Plays an essential role in the assembly of succinate dehydrogenase (SDH), an enzyme complex (also referred to as respiratory complex II) that is a component of both the tricarboxylic acid (TCA) cycle and the mitochondrial electron transport chain, and which couples the oxidation of succinate to fumarate with the reduction of ubiquinone (coenzyme Q) to ubiquinol. Required for flavinylation (covalent attachment of FAD) of the flavoprotein subunit of the SDH catalytic dimer. The protein is Succinate dehydrogenase assembly factor 2, mitochondrial of Kluyveromyces lactis (strain ATCC 8585 / CBS 2359 / DSM 70799 / NBRC 1267 / NRRL Y-1140 / WM37) (Yeast).